The following is a 143-amino-acid chain: S-adenosylmethionine decarboxylase proenzyme (143 aa).

The active-site Schiff-base intermediate with substrate; via pyruvic acid is S66. S66 is modified (pyruvic acid (Ser); by autocatalysis). The active-site Proton acceptor; for processing activity is the H71. The active-site Proton donor; for catalytic activity is C86.

This sequence belongs to the prokaryotic AdoMetDC family. Type 1 subfamily. As to quaternary structure, heterotetramer of two alpha and two beta chains arranged as a dimer of alpha/beta heterodimers. Requires pyruvate as cofactor. Post-translationally, is synthesized initially as an inactive proenzyme. Formation of the active enzyme involves a self-maturation process in which the active site pyruvoyl group is generated from an internal serine residue via an autocatalytic post-translational modification. Two non-identical subunits are generated from the proenzyme in this reaction, and the pyruvate is formed at the N-terminus of the alpha chain, which is derived from the carboxyl end of the proenzyme. The post-translation cleavage follows an unusual pathway, termed non-hydrolytic serinolysis, in which the side chain hydroxyl group of the serine supplies its oxygen atom to form the C-terminus of the beta chain, while the remainder of the serine residue undergoes an oxidative deamination to produce ammonia and the pyruvoyl group blocking the N-terminus of the alpha chain.

It catalyses the reaction S-adenosyl-L-methionine + H(+) = S-adenosyl 3-(methylsulfanyl)propylamine + CO2. Its pathway is amine and polyamine biosynthesis; S-adenosylmethioninamine biosynthesis; S-adenosylmethioninamine from S-adenosyl-L-methionine: step 1/1. Functionally, catalyzes the decarboxylation of S-adenosylmethionine to S-adenosylmethioninamine (dcAdoMet), the propylamine donor required for the synthesis of the polyamines spermine and spermidine from the diamine putrescine. This Thermococcus kodakarensis (strain ATCC BAA-918 / JCM 12380 / KOD1) (Pyrococcus kodakaraensis (strain KOD1)) protein is S-adenosylmethionine decarboxylase proenzyme.